A 302-amino-acid polypeptide reads, in one-letter code: uncharacterized protein (302 aa).

Asn32, Asn39, and Asn94 each carry an N-linked (GlcNAc...) asparagine glycan. Residues 80-115 (CRDTDMNCAVWVATNTSDCENVELVNSHCPRTCQTC) enclose the ShKT domain. Disulfide bonds link Cys80-Cys115, Cys87-Cys108, and Cys98-Cys112. Residue Asn181 is glycosylated (N-linked (GlcNAc...) asparagine).

This is an uncharacterized protein from Caenorhabditis elegans.